We begin with the raw amino-acid sequence, 450 residues long: Phosphoglucosamine mutase (450 aa).

Residue serine 104 is the Phosphoserine intermediate of the active site. The Mg(2+) site is built by serine 104, aspartate 241, aspartate 243, and aspartate 245. The residue at position 104 (serine 104) is a Phosphoserine.

Belongs to the phosphohexose mutase family. Mg(2+) is required as a cofactor. Post-translationally, activated by phosphorylation.

It catalyses the reaction alpha-D-glucosamine 1-phosphate = D-glucosamine 6-phosphate. In terms of biological role, catalyzes the conversion of glucosamine-6-phosphate to glucosamine-1-phosphate. In Renibacterium salmoninarum (strain ATCC 33209 / DSM 20767 / JCM 11484 / NBRC 15589 / NCIMB 2235), this protein is Phosphoglucosamine mutase.